A 137-amino-acid chain; its full sequence is Probable 4-amino-4-deoxy-L-arabinose-phosphoundecaprenol flippase subunit ArnF (137 aa).

Topologically, residues 1 to 3 (MNA) are cytoplasmic. A helical membrane pass occupies residues 4 to 24 (LRGWLAALGSVLLASAAQLGM). Over 25 to 44 (RWGMSRLPLPEAWAGQTPER) the chain is Periplasmic. Residues 45-65 (AALLAVALAVAAYAASLLCWL) form a helical membrane-spanning segment. Topologically, residues 66–76 (AALRHLPLGRA) are cytoplasmic. The chain crosses the membrane as a helical span at residues 77-97 (YSLLSASYALVYLLAASLPAF). The Periplasmic portion of the chain corresponds to 98–100 (DET). A helical transmembrane segment spans residues 101–121 (FSTSKTLGVGLVVLGVLTVNA). The Cytoplasmic portion of the chain corresponds to 122–137 (RRTAAAPAHHPSRKAP).

It belongs to the ArnF family. As to quaternary structure, heterodimer of ArnE and ArnF.

Its subcellular location is the cell inner membrane. Its pathway is bacterial outer membrane biogenesis; lipopolysaccharide biosynthesis. Its function is as follows. Translocates 4-amino-4-deoxy-L-arabinose-phosphoundecaprenol (alpha-L-Ara4N-phosphoundecaprenol) from the cytoplasmic to the periplasmic side of the inner membrane. This chain is Probable 4-amino-4-deoxy-L-arabinose-phosphoundecaprenol flippase subunit ArnF, found in Pseudomonas aeruginosa (strain ATCC 15692 / DSM 22644 / CIP 104116 / JCM 14847 / LMG 12228 / 1C / PRS 101 / PAO1).